The sequence spans 819 residues: Eukaryotic translation initiation factor 3 subunit C (819 aa).

Positions 1 to 106 (MSRFFLKTYE…DSSDEEDGKK (106 aa)) are disordered. Acidic residues-rich tracts occupy residues 17–41 (GEEE…ELSD) and 47–59 (DSDE…EDND). Positions 620 to 795 (FHQHINLDLI…EYIIFERGEE (176 aa)) constitute a PCI domain.

It belongs to the eIF-3 subunit C family. As to quaternary structure, component of the eukaryotic translation initiation factor 3 (eIF-3) complex.

The protein resides in the cytoplasm. Functionally, component of the eukaryotic translation initiation factor 3 (eIF-3) complex, which is involved in protein synthesis of a specialized repertoire of mRNAs and, together with other initiation factors, stimulates binding of mRNA and methionyl-tRNAi to the 40S ribosome. The eIF-3 complex specifically targets and initiates translation of a subset of mRNAs involved in cell proliferation. The chain is Eukaryotic translation initiation factor 3 subunit C from Kluyveromyces lactis (strain ATCC 8585 / CBS 2359 / DSM 70799 / NBRC 1267 / NRRL Y-1140 / WM37) (Yeast).